A 487-amino-acid chain; its full sequence is Acetyl-coenzyme A carboxylase carboxyl transferase subunit beta, chloroplastic (487 aa).

Residues 180-201 (SRNSSENEGSSKRTRTKGSDLT) form a disordered region. The CoA carboxyltransferase N-terminal domain occupies 218–487 (LWVQCENCYG…PLNQKSSKIK (270 aa)). Zn(2+) contacts are provided by cysteine 222, cysteine 225, cysteine 241, and cysteine 244. A C4-type zinc finger spans residues 222–244 (CENCYGLNYKKFLKSKMNICEQC).

The protein belongs to the AccD/PCCB family. As to quaternary structure, acetyl-CoA carboxylase is a heterohexamer composed of biotin carboxyl carrier protein, biotin carboxylase and 2 subunits each of ACCase subunit alpha and ACCase plastid-coded subunit beta (accD). It depends on Zn(2+) as a cofactor.

It is found in the plastid. The protein resides in the chloroplast stroma. It carries out the reaction N(6)-carboxybiotinyl-L-lysyl-[protein] + acetyl-CoA = N(6)-biotinyl-L-lysyl-[protein] + malonyl-CoA. Its pathway is lipid metabolism; malonyl-CoA biosynthesis; malonyl-CoA from acetyl-CoA: step 1/1. Component of the acetyl coenzyme A carboxylase (ACC) complex. Biotin carboxylase (BC) catalyzes the carboxylation of biotin on its carrier protein (BCCP) and then the CO(2) group is transferred by the transcarboxylase to acetyl-CoA to form malonyl-CoA. The polypeptide is Acetyl-coenzyme A carboxylase carboxyl transferase subunit beta, chloroplastic (Atropa belladonna (Belladonna)).